Consider the following 437-residue polypeptide: Replication factor C large subunit (437 aa).

48 to 55 is an ATP binding site; sequence GPPGVGKT. The tract at residues 410 to 437 is disordered; that stretch reads TQASKPTSEEKAEKSKKYYPKRSSSRKT. Positions 416–425 are enriched in basic and acidic residues; that stretch reads TSEEKAEKSK. Over residues 426-437 the composition is skewed to basic residues; that stretch reads KYYPKRSSSRKT.

This sequence belongs to the activator 1 small subunits family. RfcL subfamily. As to quaternary structure, heteromultimer composed of small subunits (RfcS) and large subunits (RfcL).

In terms of biological role, part of the RFC clamp loader complex which loads the PCNA sliding clamp onto DNA. In Sulfolobus acidocaldarius (strain ATCC 33909 / DSM 639 / JCM 8929 / NBRC 15157 / NCIMB 11770), this protein is Replication factor C large subunit.